We begin with the raw amino-acid sequence, 341 residues long: LRP2-binding protein (341 aa).

The TPR repeat unit spans residues 56–89; sequence VQANFLLGQLFFEEGWYEDALLQFEKVKDEDNQA. Sel1-like repeat units follow at residues 90–122, 130–165, 170–203, 204–239, 240–271, and 291–326; these read LYQA…TSDC, YAAA…DNGN, LKAQ…GNGS, LESQ…ERGN, VYAQ…SHDN, and AIAT…QLDA.

The protein localises to the cytoplasm. Functionally, may act as an adapter that regulates LRP2 function. This Xenopus laevis (African clawed frog) protein is LRP2-binding protein (lrp2bp).